A 140-amino-acid chain; its full sequence is Large ribosomal subunit protein bL19 (140 aa).

Residues 113-126 (RIAERQDRTADGKI) are compositionally biased toward basic and acidic residues. The tract at residues 113–140 (RIAERQDRTADGKIKKGGKSAPAPTAAE) is disordered.

The protein belongs to the bacterial ribosomal protein bL19 family.

In terms of biological role, this protein is located at the 30S-50S ribosomal subunit interface and may play a role in the structure and function of the aminoacyl-tRNA binding site. The sequence is that of Large ribosomal subunit protein bL19 from Xanthobacter autotrophicus (strain ATCC BAA-1158 / Py2).